Consider the following 446-residue polypeptide: Sulfoquinovose isomerase (446 aa).

Belongs to the SqvD family.

It carries out the reaction 6-sulfo-beta-D-quinovose = 6-deoxy-6-sulfo-D-fructose. In terms of biological role, part of the sulfo-TAL (or sulfo-SFT) pathway, a D-sulfoquinovose degradation pathway that produces sulfolactate (SL). Catalyzes the isomerization of sulfoquinovose (SQ) to 6-deoxy-6-sulfo-D-fructose (SF). The polypeptide is Sulfoquinovose isomerase (Priestia aryabhattai (Bacillus aryabhattai)).